Reading from the N-terminus, the 336-residue chain is Ribosomal RNA large subunit methyltransferase F (336 aa).

It belongs to the methyltransferase superfamily. METTL16/RlmF family.

It localises to the cytoplasm. It carries out the reaction adenosine(1618) in 23S rRNA + S-adenosyl-L-methionine = N(6)-methyladenosine(1618) in 23S rRNA + S-adenosyl-L-homocysteine + H(+). Functionally, specifically methylates the adenine in position 1618 of 23S rRNA. The chain is Ribosomal RNA large subunit methyltransferase F from Yersinia pestis (strain Pestoides F).